A 171-amino-acid chain; its full sequence is Putative rhomboid protein L523 (171 aa).

4 helical membrane passes run 3 to 23 (YVTY…LNFF), 67 to 87 (FAFC…AEHT), 94 to 114 (VYTV…LMSL), and 119 to 139 (GLSI…SGIS). Serine 100 acts as the Nucleophile in catalysis. The active site involves histidine 143. Residues 144–164 (ICGMIAGFVYVVLFPLPKGSV) form a helical membrane-spanning segment.

The protein belongs to the peptidase S54 family.

The protein localises to the membrane. In terms of biological role, probable serine protease. The chain is Putative rhomboid protein L523 from Acanthamoeba polyphaga mimivirus (APMV).